Here is a 671-residue protein sequence, read N- to C-terminus: DNA ligase (671 aa).

Residues 37 to 41, 86 to 87, and E117 contribute to the NAD(+) site; these read DIEYD and SL. Catalysis depends on K119, which acts as the N6-AMP-lysine intermediate. Residues R140, E177, K295, and K319 each coordinate NAD(+). Positions 413, 416, 431, and 437 each coordinate Zn(2+). Residues 594-671 enclose the BRCT domain; the sequence is IISAAVFGKT…DEEEMLNLLK (78 aa).

Belongs to the NAD-dependent DNA ligase family. LigA subfamily. The cofactor is Mg(2+). Requires Mn(2+) as cofactor.

The enzyme catalyses NAD(+) + (deoxyribonucleotide)n-3'-hydroxyl + 5'-phospho-(deoxyribonucleotide)m = (deoxyribonucleotide)n+m + AMP + beta-nicotinamide D-nucleotide.. DNA ligase that catalyzes the formation of phosphodiester linkages between 5'-phosphoryl and 3'-hydroxyl groups in double-stranded DNA using NAD as a coenzyme and as the energy source for the reaction. It is essential for DNA replication and repair of damaged DNA. This is DNA ligase from Polynucleobacter asymbioticus (strain DSM 18221 / CIP 109841 / QLW-P1DMWA-1) (Polynucleobacter necessarius subsp. asymbioticus).